The sequence spans 475 residues: Tetratricopeptide repeat protein 29 (475 aa).

TPR repeat units follow at residues 92-131 (DALR…EDAE), 136-173 (FEDV…AQLI), 182-215 (AEAH…TQGR), 234-267 (LRTY…AKEG), 274-307 (AEAS…STDL), 314-347 (GRGY…ARNN), and 354-387 (VRAS…TVEL). Positions 437–475 (IEPDPVTEEFRGSTVEAVSQNSERLEELSRFPGDQKNET) are disordered. Positions 459–475 (ERLEELSRFPGDQKNET) are enriched in basic and acidic residues.

Expressed in spermatozoa (at protein level).

Its subcellular location is the cytoplasm. The protein resides in the cytoskeleton. It localises to the flagellum axoneme. Axonemal protein which is implicated in axonemal and/or peri-axonemal structure assembly and regulates flagellum assembly and beating and therefore sperm motility. This is Tetratricopeptide repeat protein 29 (TTC29) from Homo sapiens (Human).